We begin with the raw amino-acid sequence, 116 residues long: MRHGKAGRKLNRNSSARVALARAQATALLREGRIQTTLTKAKELRPYVEKLITTAKGGDLHARRLIARDIHDKDVVRKVMNEVAPRYAERQGGYTRILRVGTRRGDGVTMALIELV.

The protein belongs to the bacterial ribosomal protein bL17 family. In terms of assembly, part of the 50S ribosomal subunit. Contacts protein L32.

The polypeptide is Large ribosomal subunit protein bL17 (Deinococcus geothermalis (strain DSM 11300 / CIP 105573 / AG-3a)).